The primary structure comprises 167 residues: MAEHQVNYASGLPVVLTSVDKLVQWGRSNSLWALSYGLACCAIEMMAAGGSRYDFDRFGTIFRASPRHSEVMIIAGTLCKKHAEFTRRLYDQMPDPKWVISMGSCANTGGMFNTYSTVQGVDRIIPVDIYVPGCAPRPESFQFALMILQKKIRKEKASRKIAPKRLV.

[4Fe-4S] cluster is bound by residues Cys40, Cys41, Cys105, and Cys134.

This sequence belongs to the complex I 20 kDa subunit family. NDH-1 is composed of 14 different subunits. Subunits NuoB, C, D, E, F, and G constitute the peripheral sector of the complex. [4Fe-4S] cluster serves as cofactor.

It is found in the cell inner membrane. The enzyme catalyses a quinone + NADH + 5 H(+)(in) = a quinol + NAD(+) + 4 H(+)(out). In terms of biological role, NDH-1 shuttles electrons from NADH, via FMN and iron-sulfur (Fe-S) centers, to quinones in the respiratory chain. The immediate electron acceptor for the enzyme in this species is believed to be ubiquinone. Couples the redox reaction to proton translocation (for every two electrons transferred, four hydrogen ions are translocated across the cytoplasmic membrane), and thus conserves the redox energy in a proton gradient. This is NADH-quinone oxidoreductase subunit B from Campylobacter jejuni subsp. jejuni serotype O:6 (strain 81116 / NCTC 11828).